The following is a 117-amino-acid chain: Putative membrane protein insertion efficiency factor (117 aa).

It belongs to the UPF0161 family.

It is found in the cell inner membrane. Its function is as follows. Could be involved in insertion of integral membrane proteins into the membrane. In Helicobacter pylori (strain ATCC 700392 / 26695) (Campylobacter pylori), this protein is Putative membrane protein insertion efficiency factor.